The chain runs to 356 residues: Manganese-dependent ADP-ribose/CDP-alcohol diphosphatase (356 aa).

Residues Asp-32, Gln-34, Asp-81, Asn-117, His-253, His-290, and His-292 each contribute to the Zn(2+) site.

Belongs to the ADPRibase-Mn family. As to quaternary structure, monomer. Requires Mg(2+) as cofactor.

It carries out the reaction CDP-choline + H2O = phosphocholine + CMP + 2 H(+). The enzyme catalyses ADP-D-ribose + H2O = D-ribose 5-phosphate + AMP + 2 H(+). It catalyses the reaction CDP-glycerol + H2O = sn-glycerol 3-phosphate + CMP + 2 H(+). Functionally, hydrolyzes ADP-ribose, IDP-ribose, CDP-glycerol, CDP-choline and CDP-ethanolamine, but not other non-reducing ADP-sugars or CDP-glucose. The polypeptide is Manganese-dependent ADP-ribose/CDP-alcohol diphosphatase (adprm) (Xenopus laevis (African clawed frog)).